Reading from the N-terminus, the 100-residue chain is Urease subunit gamma (100 aa).

This sequence belongs to the urease gamma subunit family. As to quaternary structure, heterotrimer of UreA (gamma), UreB (beta) and UreC (alpha) subunits. Three heterotrimers associate to form the active enzyme.

It localises to the cytoplasm. The catalysed reaction is urea + 2 H2O + H(+) = hydrogencarbonate + 2 NH4(+). The protein operates within nitrogen metabolism; urea degradation; CO(2) and NH(3) from urea (urease route): step 1/1. This is Urease subunit gamma from Synechococcus sp. (strain CC9605).